We begin with the raw amino-acid sequence, 417 residues long: 3-isopropylmalate dehydratase large subunit (417 aa).

Positions 298, 358, and 361 each coordinate [4Fe-4S] cluster.

This sequence belongs to the aconitase/IPM isomerase family. LeuC type 2 subfamily. Heterodimer of LeuC and LeuD. The cofactor is [4Fe-4S] cluster.

It catalyses the reaction (2R,3S)-3-isopropylmalate = (2S)-2-isopropylmalate. It functions in the pathway amino-acid biosynthesis; L-leucine biosynthesis; L-leucine from 3-methyl-2-oxobutanoate: step 2/4. Its function is as follows. Catalyzes the isomerization between 2-isopropylmalate and 3-isopropylmalate, via the formation of 2-isopropylmaleate. In Thermoanaerobacter pseudethanolicus (strain ATCC 33223 / 39E) (Clostridium thermohydrosulfuricum), this protein is 3-isopropylmalate dehydratase large subunit.